Reading from the N-terminus, the 299-residue chain is Oxygen-dependent coproporphyrinogen-III oxidase (299 aa).

Serine 92 contacts substrate. 2 residues coordinate a divalent metal cation: histidine 96 and histidine 106. Catalysis depends on histidine 106, which acts as the Proton donor. 108–110 (NVR) contributes to the substrate binding site. A divalent metal cation is bound by residues histidine 145 and histidine 175. Residues 240 to 275 (YVEFNLVWDRGTLFGLQTGGRTESILMSMPPLVRWE) are important for dimerization. Position 258–260 (258–260 (GGR)) interacts with substrate.

This sequence belongs to the aerobic coproporphyrinogen-III oxidase family. Homodimer. A divalent metal cation serves as cofactor.

The protein resides in the cytoplasm. The enzyme catalyses coproporphyrinogen III + O2 + 2 H(+) = protoporphyrinogen IX + 2 CO2 + 2 H2O. Its pathway is porphyrin-containing compound metabolism; protoporphyrin-IX biosynthesis; protoporphyrinogen-IX from coproporphyrinogen-III (O2 route): step 1/1. In terms of biological role, involved in the heme biosynthesis. Catalyzes the aerobic oxidative decarboxylation of propionate groups of rings A and B of coproporphyrinogen-III to yield the vinyl groups in protoporphyrinogen-IX. The chain is Oxygen-dependent coproporphyrinogen-III oxidase from Salmonella paratyphi B (strain ATCC BAA-1250 / SPB7).